We begin with the raw amino-acid sequence, 286 residues long: Pantothenate synthetase (286 aa).

30-37 (MGNLHEGH) lines the ATP pocket. The active-site Proton donor is H37. Residue Q64 coordinates (R)-pantoate. Q64 provides a ligand contact to beta-alanine. 151–154 (GKKD) lines the ATP pocket. Q157 contributes to the (R)-pantoate binding site. Residues L180 and 188-191 (LSSR) each bind ATP.

The protein belongs to the pantothenate synthetase family. In terms of assembly, homodimer.

Its subcellular location is the cytoplasm. It carries out the reaction (R)-pantoate + beta-alanine + ATP = (R)-pantothenate + AMP + diphosphate + H(+). It participates in cofactor biosynthesis; (R)-pantothenate biosynthesis; (R)-pantothenate from (R)-pantoate and beta-alanine: step 1/1. In terms of biological role, catalyzes the condensation of pantoate with beta-alanine in an ATP-dependent reaction via a pantoyl-adenylate intermediate. This is Pantothenate synthetase from Leptothrix cholodnii (strain ATCC 51168 / LMG 8142 / SP-6) (Leptothrix discophora (strain SP-6)).